Consider the following 215-residue polypeptide: 3-demethoxyubiquinol 3-hydroxylase (215 aa).

Positions 64, 94, 97, 146, 178, and 181 each coordinate Fe cation.

This sequence belongs to the COQ7 family. Requires Fe cation as cofactor.

It localises to the cell membrane. It carries out the reaction a 5-methoxy-2-methyl-3-(all-trans-polyprenyl)benzene-1,4-diol + AH2 + O2 = a 3-demethylubiquinol + A + H2O. Its pathway is cofactor biosynthesis; ubiquinone biosynthesis. In terms of biological role, catalyzes the hydroxylation of 2-nonaprenyl-3-methyl-6-methoxy-1,4-benzoquinol during ubiquinone biosynthesis. This is 3-demethoxyubiquinol 3-hydroxylase from Pseudomonas aeruginosa (strain LESB58).